A 419-amino-acid polypeptide reads, in one-letter code: UDP-N-acetylglucosamine 1-carboxyvinyltransferase 2 (419 aa).

Residue 22–23 (KN) coordinates phosphoenolpyruvate. Arg-92 is a UDP-N-acetyl-alpha-D-glucosamine binding site. Residue Asp-116 is the Proton donor of the active site. UDP-N-acetyl-alpha-D-glucosamine-binding positions include 121–125 (RPIDQ), Asp-306, and Leu-328.

It belongs to the EPSP synthase family. MurA subfamily.

The protein localises to the cytoplasm. It carries out the reaction phosphoenolpyruvate + UDP-N-acetyl-alpha-D-glucosamine = UDP-N-acetyl-3-O-(1-carboxyvinyl)-alpha-D-glucosamine + phosphate. It participates in cell wall biogenesis; peptidoglycan biosynthesis. In terms of biological role, cell wall formation. Adds enolpyruvyl to UDP-N-acetylglucosamine. The chain is UDP-N-acetylglucosamine 1-carboxyvinyltransferase 2 from Latilactobacillus sakei subsp. sakei (strain 23K) (Lactobacillus sakei subsp. sakei).